We begin with the raw amino-acid sequence, 272 residues long: 1,4-dihydroxy-6-naphtoate synthase (272 aa).

Substrate contacts are provided by residues 55 to 57 and 107 to 108; these read KLS and TA. Catalysis depends on His-145, which acts as the Proton acceptor.

The protein belongs to the MqnA/MqnD family. MqnD subfamily.

The catalysed reaction is cyclic dehypoxanthinylfutalosinate = 1,4-dihydroxy-6-naphthoate + dihydroxyacetone. It functions in the pathway quinol/quinone metabolism; menaquinone biosynthesis. Functionally, catalyzes the conversion of cyclic dehypoxanthine futalosine (cyclic DHFL) into 1,4-dihydroxy-6-naphthoate, a step in the biosynthesis of menaquinone (MK, vitamin K2). This Thermus thermophilus (strain ATCC 27634 / DSM 579 / HB8) protein is 1,4-dihydroxy-6-naphtoate synthase.